Consider the following 842-residue polypeptide: Glycogen phosphorylase, muscle form (842 aa).

An N-acetylserine modification is found at S2. The residue at position 15 (S15) is a Phosphoserine; by PHK; in form phosphorylase A. Positions 43 and 76 each coordinate AMP. Phosphotyrosine is present on residues Y204 and Y227. AMP is bound at residue 310-319; the sequence is RRFKSSKFGC. A Phosphoserine modification is found at S430. At Y473 the chain carries Phosphotyrosine. At S514 the chain carries Phosphoserine. K681 bears the N6-(pyridoxal phosphate)lysine mark. Phosphoserine is present on residues S747 and S748.

The protein belongs to the glycogen phosphorylase family. Homodimer. Homotetramer; to form the enzymatically active phosphorylase A. Pyridoxal 5'-phosphate serves as cofactor. Phosphorylation of Ser-15 converts phosphorylase B (unphosphorylated) to phosphorylase A.

It catalyses the reaction [(1-&gt;4)-alpha-D-glucosyl](n) + phosphate = [(1-&gt;4)-alpha-D-glucosyl](n-1) + alpha-D-glucose 1-phosphate. Allosterically regulated through the non-covalent binding of metabolites, being activated by AMP and inhibited by ATP, ADP, and glucose-6-phosphate. The activity is also controlled by post-translational modifications including phosphorylation. Functionally, allosteric enzyme that catalyzes the rate-limiting step in glycogen catabolism, the phosphorolytic cleavage of glycogen to produce glucose-1-phosphate, and plays a central role in maintaining cellular and organismal glucose homeostasis. This is Glycogen phosphorylase, muscle form from Homo sapiens (Human).